The following is a 372-amino-acid chain: Glutamate 5-kinase (372 aa).

Lys-14 contacts ATP. Ser-54, Asp-141, and Asn-153 together coordinate substrate. ATP is bound by residues 173–174 (TD) and 215–221 (TGGMATK). The 79-residue stretch at 280–358 (RGQLVIDAGA…DSIEEVLGYD (79 aa)) folds into the PUA domain.

It belongs to the glutamate 5-kinase family.

It is found in the cytoplasm. The catalysed reaction is L-glutamate + ATP = L-glutamyl 5-phosphate + ADP. The protein operates within amino-acid biosynthesis; L-proline biosynthesis; L-glutamate 5-semialdehyde from L-glutamate: step 1/2. Functionally, catalyzes the transfer of a phosphate group to glutamate to form L-glutamate 5-phosphate. The protein is Glutamate 5-kinase of Shewanella pealeana (strain ATCC 700345 / ANG-SQ1).